Consider the following 79-residue polypeptide: Cell division protein ZapB (79 aa).

Residues 1-78 (MSLEALDQLQ…LNSLLGKMDD (78 aa)) adopt a coiled-coil conformation.

The protein belongs to the ZapB family. In terms of assembly, homodimer. The ends of the coiled-coil dimer bind to each other, forming polymers. Interacts with FtsZ.

The protein resides in the cytoplasm. In terms of biological role, non-essential, abundant cell division factor that is required for proper Z-ring formation. It is recruited early to the divisome by direct interaction with FtsZ, stimulating Z-ring assembly and thereby promoting cell division earlier in the cell cycle. Its recruitment to the Z-ring requires functional FtsA or ZipA. The polypeptide is Cell division protein ZapB (Hamiltonella defensa subsp. Acyrthosiphon pisum (strain 5AT)).